Here is a 380-residue protein sequence, read N- to C-terminus: Cysteine protease ATG4A (380 aa).

Cys60 (nucleophile) is an active-site residue. Residues Asp262 and His264 contribute to the active site. An LIR motif is present at residues 375 to 378; that stretch reads FEIL.

This sequence belongs to the peptidase C54 family.

The protein localises to the cytoplasm. The catalysed reaction is [protein]-C-terminal L-amino acid-glycyl-phosphatidylethanolamide + H2O = [protein]-C-terminal L-amino acid-glycine + a 1,2-diacyl-sn-glycero-3-phosphoethanolamine. Its function is as follows. Cysteine protease that plays a key role in autophagy by mediating both proteolytic activation and delipidation of ATG8 family proteins. The protease activity is required for proteolytic activation of ATG8 family proteins: cleaves the C-terminal amino acid of ATG8 proteins to reveal a C-terminal glycine. Exposure of the glycine at the C-terminus is essential for ATG8 proteins conjugation to phosphatidylethanolamine (PE) and insertion to membranes, which is necessary for autophagy. Protease activity is also required to counteract formation of high-molecular weight conjugates of ATG8 proteins (ATG8ylation): acts as a deubiquitinating-like enzyme that removes ATG8 conjugated to other proteins, such as ATG3. In addition to the protease activity, also mediates delipidation of ATG8 family proteins. Catalyzes delipidation of PE-conjugated forms of ATG8 proteins during macroautophagy. In Gallus gallus (Chicken), this protein is Cysteine protease ATG4A.